The following is a 291-amino-acid chain: ATP synthase gamma chain (291 aa).

The protein belongs to the ATPase gamma chain family. F-type ATPases have 2 components, CF(1) - the catalytic core - and CF(0) - the membrane proton channel. CF(1) has five subunits: alpha(3), beta(3), gamma(1), delta(1), epsilon(1). CF(0) has three main subunits: a, b and c.

The protein resides in the cell inner membrane. Its function is as follows. Produces ATP from ADP in the presence of a proton gradient across the membrane. The gamma chain is believed to be important in regulating ATPase activity and the flow of protons through the CF(0) complex. The protein is ATP synthase gamma chain of Pelodictyon phaeoclathratiforme (strain DSM 5477 / BU-1).